Consider the following 170-residue polypeptide: MTELQSALLLRRQLAELNKNPVEGFSAGLIDDNDLYRWEVLIIGPPDTLYEGGVFKAHLTFPKDYPLRPPKMKFITEIWHPNVDKNGDVCISILHEPGEDKYGYEKPEERWLPIHTVETIMISVISMLADPNGDSPANVDAAKEWREDRNGEFKRKVARCVRKSQETAFE.

At M1 the chain carries N-acetylmethionine. Position 2 is an N-acetylthreonine; in Ubiquitin-conjugating enzyme E2 G1, N-terminally processed (T2). The 162-residue stretch at 5–166 (QSALLLRRQL…VARCVRKSQE (162 aa)) folds into the UBC core domain. Catalysis depends on C90, which acts as the Glycyl thioester intermediate.

This sequence belongs to the ubiquitin-conjugating enzyme family. Post-translationally, autoubiquitinated in vitro. In terms of tissue distribution, widely expressed, mainly in skeletal muscle.

It catalyses the reaction S-ubiquitinyl-[E1 ubiquitin-activating enzyme]-L-cysteine + [E2 ubiquitin-conjugating enzyme]-L-cysteine = [E1 ubiquitin-activating enzyme]-L-cysteine + S-ubiquitinyl-[E2 ubiquitin-conjugating enzyme]-L-cysteine.. Its pathway is protein modification; protein ubiquitination. Functionally, accepts ubiquitin from the E1 complex and catalyzes its covalent attachment to other proteins. In vitro catalyzes 'Lys-48'-, as well as 'Lys-63'-linked polyubiquitination. May be involved in degradation of muscle-specific proteins. Mediates polyubiquitination of CYP3A4. This chain is Ubiquitin-conjugating enzyme E2 G1 (UBE2G1), found in Homo sapiens (Human).